The following is a 191-amino-acid chain: ECF RNA polymerase sigma-E factor (191 aa).

Residues 1-153 are binds RNAP core; that stretch reads MSEQLTDQVL…MAITLRELDG (153 aa). Residues 25–92 are sigma-70 factor domain-2; sequence LVVRYQHKVA…KNYLVAQGRR (68 aa). Residues 48-61 carry the Polymerase core binding motif; sequence DVVQESFIKAYRAL. Residues 129–180 are sigma-70 factor domain-4; the sequence is QIVFRTIESLPEDLRMAITLRELDGLSYEEIAAIMDCPVGTVRSRIFRAREA. Positions 156–175 form a DNA-binding region, H-T-H motif; the sequence is YEEIAAIMDCPVGTVRSRIF.

This sequence belongs to the sigma-70 factor family. ECF subfamily. Interacts transiently with the RNAP catalytic core formed by RpoA, RpoB, RpoC and RpoZ (2 alpha, 1 beta, 1 beta' and 1 omega subunit) to form the RNAP holoenzyme that can initiate transcription. Interacts 1:1 with anti-sigma-E factor RseA which prevents binding to RNAP catalytic core.

The protein resides in the cytoplasm. Its activity is regulated as follows. ECF sigma-E is held in an inactive form by its cognate anti-sigma factor (RseA) until released by regulated intramembrane proteolysis (RIP). RIP occurs when an extracytoplasmic signal (periplasmic, acid or heat stress) triggers a concerted proteolytic cascade to transmit information and elicit cellular responses. In S.typhimurium there are 2 cascades, the heat shock response which depends on DegS and RseP, and acid response which depends only on RseP. The anti-sigma factor RseA is an inner membrane protein, binding sigma-E in the cytoplasm and RseB in the periplasm. RseA is first cut extracytoplasmically (site-1 protease, S1P, by DegS), then within the membrane itself (site-2 protease, S2P, by RseP), while cytoplasmic proteases (predominantly ClpX-ClpP) finish degrading the regulatory protein, liberating sigma-E. Degradation of RseA requires 2 signals to activate DegS; an outer membrane protein (OMP) signal activates DegS, while an LPS signal causes release of RseB from RseA, freeing RseA to be cleaved. OMP stress can be abrogated by overexpression of the sRNA rybB. Sigma factors are initiation factors that promote the attachment of RNA polymerase (RNAP) to specific initiation sites and are then released. Extracytoplasmic function (ECF) sigma-E controls the envelope stress response, responding to periplasmic protein stress, increased levels of periplasmic lipopolysaccharide (LPS) as well as acid stress, heat shock and oxidative stress; it controls protein processing in the extracytoplasmic compartment. This chain is ECF RNA polymerase sigma-E factor (rpoE), found in Salmonella typhimurium (strain 14028s / SGSC 2262).